The following is a 117-amino-acid chain: Immunoglobulin kappa variable 1D-43 (117 aa).

Positions 1–22 (MDMRVPAQRLGLLLLWFPGARC) are cleaved as a signal peptide. The interval 23-45 (AIRMTQSPFSLSASVGDRVTITC) is framework-1. An Ig-like domain is found at 23–117 (AIRMTQSPFS…YYCQQYYSTP (95 aa)). A disulfide bond links C45 and C110. The interval 46–56 (WASQGISSYLA) is complementarity-determining-1. The tract at residues 57-71 (WYQQKPAKAPKLFIY) is framework-2. Positions 72–78 (YASSLQS) are complementarity-determining-2. Residues 79–110 (GVPSRFSGSGSGTDYTLTISSLQPEDFATYYC) are framework-3. Residues 111–117 (QQYYSTP) are complementarity-determining-3.

In terms of assembly, immunoglobulins are composed of two identical heavy chains and two identical light chains; disulfide-linked.

The protein resides in the secreted. The protein localises to the cell membrane. Functionally, v region of the variable domain of immunoglobulin light chains that participates in the antigen recognition. Immunoglobulins, also known as antibodies, are membrane-bound or secreted glycoproteins produced by B lymphocytes. In the recognition phase of humoral immunity, the membrane-bound immunoglobulins serve as receptors which, upon binding of a specific antigen, trigger the clonal expansion and differentiation of B lymphocytes into immunoglobulins-secreting plasma cells. Secreted immunoglobulins mediate the effector phase of humoral immunity, which results in the elimination of bound antigens. The antigen binding site is formed by the variable domain of one heavy chain, together with that of its associated light chain. Thus, each immunoglobulin has two antigen binding sites with remarkable affinity for a particular antigen. The variable domains are assembled by a process called V-(D)-J rearrangement and can then be subjected to somatic hypermutations which, after exposure to antigen and selection, allow affinity maturation for a particular antigen. The sequence is that of Immunoglobulin kappa variable 1D-43 from Homo sapiens (Human).